Reading from the N-terminus, the 559-residue chain is Aspartokinase 3, chloroplastic (559 aa).

The N-terminal 85 residues, 1–85 (MAASMQFYGV…LNKTEKKLTC (85 aa)), are a transit peptide targeting the chloroplast. Positions 88, 91, and 120 each coordinate ATP. E204 contacts substrate. 2 ACT domains span residues 402 to 480 (ITST…SIIS) and 481 to 559 (LIGN…AASS).

It belongs to the aspartokinase family. Highly expressed in xylem of leaves and hypocotyls, stele of roots and in trichomes after bolting. Weak expression in veins and mesophyll cells of caulone leaves, inflorescence stems, sepals, petals and stigmata.

The protein resides in the plastid. It localises to the chloroplast. The catalysed reaction is L-aspartate + ATP = 4-phospho-L-aspartate + ADP. The protein operates within amino-acid biosynthesis; L-lysine biosynthesis via DAP pathway; (S)-tetrahydrodipicolinate from L-aspartate: step 1/4. It functions in the pathway amino-acid biosynthesis; L-methionine biosynthesis via de novo pathway; L-homoserine from L-aspartate: step 1/3. Its pathway is amino-acid biosynthesis; L-threonine biosynthesis; L-threonine from L-aspartate: step 1/5. Allosterically inhibited by lysine, but not by S-adenosyl-L-methionine (SAM). K(0.5) for lysine in the presence of physiological concentrations of substrates is 7.4 uM. No inhibition by threonine or leucine and no activation or inhibition by alanine, cysteine, isoleucine, serine, valine, methionine, glutamine, asparagine, glutamic acid or arginine. Its function is as follows. Involved in the first step of essential amino acids lysine, threonine, methionine and isoleucine synthesis via the aspartate-family pathway. This chain is Aspartokinase 3, chloroplastic (AK3), found in Arabidopsis thaliana (Mouse-ear cress).